We begin with the raw amino-acid sequence, 388 residues long: S-adenosylmethionine synthase (388 aa).

H17 contributes to the ATP binding site. D19 is a Mg(2+) binding site. E45 contacts K(+). Positions 58 and 101 each coordinate L-methionine. A flexible loop region spans residues 101 to 111 (QSPDIGQGVDT). ATP contacts are provided by residues 160-162 (DGK), 226-227 (RF), D235, 241-242 (RK), A258, and K262. D235 lines the L-methionine pocket. K266 is a binding site for L-methionine.

The protein belongs to the AdoMet synthase family. Homotetramer; dimer of dimers. Requires Mg(2+) as cofactor. It depends on K(+) as a cofactor.

The protein resides in the cytoplasm. The enzyme catalyses L-methionine + ATP + H2O = S-adenosyl-L-methionine + phosphate + diphosphate. The protein operates within amino-acid biosynthesis; S-adenosyl-L-methionine biosynthesis; S-adenosyl-L-methionine from L-methionine: step 1/1. In terms of biological role, catalyzes the formation of S-adenosylmethionine (AdoMet) from methionine and ATP. The overall synthetic reaction is composed of two sequential steps, AdoMet formation and the subsequent tripolyphosphate hydrolysis which occurs prior to release of AdoMet from the enzyme. This is S-adenosylmethionine synthase from Anaeromyxobacter sp. (strain K).